The primary structure comprises 395 residues: Protein PIN-LIKES 7 (395 aa).

The Lumenal segment spans residues 1-8; it reads MGFLELLE. A helical membrane pass occupies residues 9–29; the sequence is VASMPIVQVLLISVLGAFLAT. Over 30–45 the chain is Cytoplasmic; sequence DYCSLLSADTRRSVNK. Residues 46-66 traverse the membrane as a helical segment; the sequence is LVFVVFTPCIMFANLAETVTL. Topologically, residues 67–73 are lumenal; it reads QDIISWW. The helical transmembrane segment at 74–94 threads the bilayer; that stretch reads FMPINVGITFLVGGILGWLVV. Residues 95–106 are Cytoplasmic-facing; sequence KLLNPKPQLHGL. A helical membrane pass occupies residues 107-127; that stretch reads IIATCASGNMGNLMLILVPAI. At 128–142 the chain is on the lumenal side; the sequence is CDEEGSPFGNRSVCR. Residues 143–163 traverse the membrane as a helical segment; it reads SIGLSYASFSMALGGFYIWTY. The Cytoplasmic portion of the chain corresponds to 164–232; that stretch reads SYQLVRSSAT…KDLLHQILEE (69 aa). Residues 233 to 253 form a helical membrane-spanning segment; the sequence is LFAPPTIGAILGFVFGATNWL. Topologically, residues 254–272 are lumenal; sequence RNLIIGENAPLRVIQDSVK. The chain crosses the membrane as a helical span at residues 273-293; that stretch reads LLGEGTIPCITLILGGNLIQG. The Cytoplasmic segment spans residues 294–302; that stretch reads LRSSAVKKS. A helical transmembrane segment spans residues 303–323; the sequence is VIVGVIIVRYILLPVVGVGVV. The Lumenal segment spans residues 324–340; sequence QLAGNLGYLPPDPLFRY. Residues 341–361 traverse the membrane as a helical segment; it reads VLMLQFALPPAMNISTMAQLF. Residues 362–369 lie on the Cytoplasmic side of the membrane; the sequence is DVAQDECS. A helical membrane pass occupies residues 370–390; the sequence is VIFLWTYLVASLALTVWSTIF. At 391–395 the chain is on the lumenal side; the sequence is LSILS.

The protein belongs to the auxin efflux carrier (TC 2.A.69.2) family. Expressed in seedlings, rosette and cauline leaves, stems and flowers.

It localises to the endoplasmic reticulum membrane. Involved in cellular auxin homeostasis by regulating auxin metabolism. Regulates intracellular auxin accumulation at the endoplasmic reticulum and thus auxin availability for nuclear auxin signaling. The polypeptide is Protein PIN-LIKES 7 (Arabidopsis thaliana (Mouse-ear cress)).